We begin with the raw amino-acid sequence, 375 residues long: AA9 family lytic polysaccharide monooxygenase CEL1 (375 aa).

Residues 1–16 form the signal peptide; the sequence is MLFPALALLCPVLVAA. His-119 is a binding site for Cu(2+). A disulfide bond links Cys-130 and Cys-135. Residue Asn-132 is glycosylated (N-linked (GlcNAc...) asparagine). Position 196 (His-196) interacts with O2. Residue Asn-197 is glycosylated (N-linked (GlcNAc...) asparagine). Tyr-212 serves as a coordination point for Cu(2+). Cys-232 and Cys-237 are joined by a disulfide. The disordered stretch occupies residues 287–375; sequence NGMSSSPSSS…RSRVAHLDRH (89 aa). The segment covering 290–341 has biased composition (low complexity); sequence SSSPSSSSGVSSSSSSSVASSDTSDSTTSSGVVAVNVSAASSPSSSISANSA. An N-linked (GlcNAc...) asparagine glycan is attached at Asn-325. Basic residues predominate over residues 347–369; sequence KTCKRKKRSKIAGQKRHIHRSRV.

This sequence belongs to the polysaccharide monooxygenase AA9 family. Requires Cu(2+) as cofactor.

It is found in the secreted. The protein localises to the cell wall. The catalysed reaction is [(1-&gt;4)-beta-D-glucosyl]n+m + reduced acceptor + O2 = 4-dehydro-beta-D-glucosyl-[(1-&gt;4)-beta-D-glucosyl]n-1 + [(1-&gt;4)-beta-D-glucosyl]m + acceptor + H2O.. Its function is as follows. Lytic polysaccharide monooxygenase (LPMO) that depolymerizes polysaccharides via the oxidation of scissile alpha- or beta-(1-4)-glycosidic bonds, yielding C4 oxidation products. Catalysis by LPMOs requires the reduction of the active-site copper from Cu(II) to Cu(I) by a reducing agent and H(2)O(2) or O(2) as a cosubstrate. Required for the expression of stress response phenotypes, including thermotolerance, cell wall integrity, and efficient cell cycle progression. Promotes intrinsic fungal cell wall remodeling events required for efficient adaptation to the host environment. Required for virulence in a murine inhalational model of cryptococcal infection as well as in Galleria mellonella larvae. The chain is AA9 family lytic polysaccharide monooxygenase CEL1 from Cryptococcus neoformans var. grubii serotype A (strain H99 / ATCC 208821 / CBS 10515 / FGSC 9487) (Filobasidiella neoformans var. grubii).